We begin with the raw amino-acid sequence, 1073 residues long: Carbamoyl phosphate synthase large chain (1073 aa).

Residues 1-403 form a carboxyphosphate synthetic domain region; sequence MPKRTDIKSI…SLQKALRGLE (403 aa). Positions 129, 169, 175, 176, 208, 210, 215, 241, 242, 243, 285, and 299 each coordinate ATP. The ATP-grasp 1 domain occupies 133–328; it reads DKAMKDIGLE…IAKIAAKLAI (196 aa). The Mg(2+) site is built by Q285, E299, and N301. Mn(2+) contacts are provided by Q285, E299, and N301. Residues 404 to 553 are oligomerization domain; it reads VGACGLDPKV…YSTYEEECEA (150 aa). Residues 554 to 935 are carbamoyl phosphate synthetic domain; that stretch reads NPSTRDKIMI…AFAKAQMGAS (382 aa). The ATP-grasp 2 domain maps to 678-869; the sequence is QQMVQRLSLL…LAMIAARVMA (192 aa). ATP is bound by residues R714, H753, L755, E760, G785, V786, H787, S788, Q828, and E840. Positions 828, 840, and 842 each coordinate Mg(2+). The Mn(2+) site is built by Q828, E840, and N842. An MGS-like domain is found at 936–1073; it reads EVLPTGGTAF…LQDLHAGLKA (138 aa). An allosteric domain region spans residues 936-1073; the sequence is EVLPTGGTAF…LQDLHAGLKA (138 aa).

It belongs to the CarB family. As to quaternary structure, composed of two chains; the small (or glutamine) chain promotes the hydrolysis of glutamine to ammonia, which is used by the large (or ammonia) chain to synthesize carbamoyl phosphate. Tetramer of heterodimers (alpha,beta)4. Mg(2+) serves as cofactor. It depends on Mn(2+) as a cofactor.

It catalyses the reaction hydrogencarbonate + L-glutamine + 2 ATP + H2O = carbamoyl phosphate + L-glutamate + 2 ADP + phosphate + 2 H(+). The enzyme catalyses hydrogencarbonate + NH4(+) + 2 ATP = carbamoyl phosphate + 2 ADP + phosphate + 2 H(+). It functions in the pathway amino-acid biosynthesis; L-arginine biosynthesis; carbamoyl phosphate from bicarbonate: step 1/1. Its pathway is pyrimidine metabolism; UMP biosynthesis via de novo pathway; (S)-dihydroorotate from bicarbonate: step 1/3. Large subunit of the glutamine-dependent carbamoyl phosphate synthetase (CPSase). CPSase catalyzes the formation of carbamoyl phosphate from the ammonia moiety of glutamine, carbonate, and phosphate donated by ATP, constituting the first step of 2 biosynthetic pathways, one leading to arginine and/or urea and the other to pyrimidine nucleotides. The large subunit (synthetase) binds the substrates ammonia (free or transferred from glutamine from the small subunit), hydrogencarbonate and ATP and carries out an ATP-coupled ligase reaction, activating hydrogencarbonate by forming carboxy phosphate which reacts with ammonia to form carbamoyl phosphate. This Pseudomonas putida (strain ATCC 47054 / DSM 6125 / CFBP 8728 / NCIMB 11950 / KT2440) protein is Carbamoyl phosphate synthase large chain.